The primary structure comprises 200 residues: Glutathione peroxidase 1 (200 aa).

Serine 31 bears the Phosphoserine mark. Selenocysteine 46 is a catalytic residue. Position 46 (selenocysteine 46) is a non-standard amino acid, selenocysteine. 2 positions are modified to N6-acetyllysine; alternate: lysine 85 and lysine 111. 2 positions are modified to N6-succinyllysine; alternate: lysine 85 and lysine 111. The residue at position 118 (lysine 118) is an N6-acetyllysine. Residue lysine 145 is modified to N6-acetyllysine; alternate. Lysine 145 is modified (N6-succinyllysine; alternate). Serine 194 is modified (phosphoserine).

Belongs to the glutathione peroxidase family. As to quaternary structure, homotetramer. Interacts with MIEN1. In terms of processing, during periods of oxidative stress, Sec-46 may react with a superoxide radical, irreversibly lose hydroselenide and be converted to dehydroalanine.

The protein resides in the cytoplasm. It localises to the mitochondrion. It catalyses the reaction 2 glutathione + H2O2 = glutathione disulfide + 2 H2O. It carries out the reaction a hydroperoxy polyunsaturated fatty acid + 2 glutathione = a hydroxy polyunsaturated fatty acid + glutathione disulfide + H2O. The enzyme catalyses tert-butyl hydroperoxide + 2 glutathione = tert-butanol + glutathione disulfide + H2O. The catalysed reaction is cumene hydroperoxide + 2 glutathione = 2-phenylpropan-2-ol + glutathione disulfide + H2O. It catalyses the reaction (13S)-hydroperoxy-(9Z,11E)-octadecadienoate + 2 glutathione = (13S)-hydroxy-(9Z,11E)-octadecadienoate + glutathione disulfide + H2O. It carries out the reaction (9S)-hydroperoxy-(10E,12Z)-octadecadienoate + 2 glutathione = (9S)-hydroxy-(10E,12Z)-octadecadienoate + glutathione disulfide + H2O. The enzyme catalyses (5S)-hydroperoxy-(6E,8Z,11Z,14Z)-eicosatetraenoate + 2 glutathione = (5S)-hydroxy-(6E,8Z,11Z,14Z)-eicosatetraenoate + glutathione disulfide + H2O. The catalysed reaction is (12S)-hydroperoxy-(5Z,8Z,10E,14Z)-eicosatetraenoate + 2 glutathione = (12S)-hydroxy-(5Z,8Z,10E,14Z)-eicosatetraenoate + glutathione disulfide + H2O. It catalyses the reaction (12R)-hydroperoxy-(5Z,8Z,10E,14Z)-eicosatetraenoate + 2 glutathione = (12R)-hydroxy-(5Z,8Z,10E,14Z)-eicosatetraenoate + glutathione disulfide + H2O. It carries out the reaction (15S)-hydroperoxy-(5Z,8Z,11Z,13E)-eicosatetraenoate + 2 glutathione = (15S)-hydroxy-(5Z,8Z,11Z,13E)-eicosatetraenoate + glutathione disulfide + H2O. The enzyme catalyses (5S)-hydroperoxy-(6E,8Z,11Z,14Z,17Z)-eicosapentaenoate + 2 glutathione = (5S)-hydroxy-(6E,8Z,11Z,14Z,17Z)-eicosapentaenoate + glutathione disulfide + H2O. The catalysed reaction is (12S)-hydroperoxy-(5Z,8Z,10E,14Z,17Z)-eicosapentaenoate + 2 glutathione = (12S)-hydroxy-(5Z,8Z,10E,14Z,17Z)-eicosapentaenoate + glutathione disulfide + H2O. It catalyses the reaction (15S)-hydroperoxy-(5Z,8Z,11Z,13E,17Z)-eicosapentaenoate + 2 glutathione = (15S)-hydroxy-(5Z,8Z,11Z,13E,17Z)-eicosapentaenoate + glutathione disulfide + H2O. It carries out the reaction (15S)-hydroperoxy-(11Z,13E)-eicosadienoate + 2 glutathione = (15S)-hydroxy-(11Z,13E)-eicosadienoate + glutathione disulfide + H2O. The enzyme catalyses (17S)-hydroperoxy-(4Z,7Z,10Z,13Z,15E,19Z)-docosahexaenoate + 2 glutathione = (17S)-hydroxy-(4Z,7Z,10Z,13Z,15E,19Z)-docosahexaenoate + glutathione disulfide + H2O. Functionally, catalyzes the reduction of hydroperoxides in a glutathione-dependent manner thus regulating cellular redox homeostasis. Can reduce small soluble hydroperoxides such as H2O2, cumene hydroperoxide and tert-butyl hydroperoxide, as well as several fatty acid-derived hydroperoxides. In platelets catalyzes the reduction of 12-hydroperoxyeicosatetraenoic acid, the primary product of the arachidonate 12-lipoxygenase pathway. The chain is Glutathione peroxidase 1 (GPX1) from Oryctolagus cuniculus (Rabbit).